Reading from the N-terminus, the 336-residue chain is UPF0324 membrane protein lp_2841 (336 aa).

The next 9 membrane-spanning stretches (helical) occupy residues 5-22 (GILP…ISQG), 26-48 (FVPA…NTFL), 84-106 (IGGF…ALWL), 116-138 (VRML…IAPV), 150-172 (ITLV…MAVF), 204-226 (TVQF…VLIF), 255-277 (WYVA…AIIG), 282-304 (TISS…LVNF), and 311-333 (LALY…ITLL).

The protein belongs to the UPF0324 family.

Its subcellular location is the cell membrane. This is UPF0324 membrane protein lp_2841 from Lactiplantibacillus plantarum (strain ATCC BAA-793 / NCIMB 8826 / WCFS1) (Lactobacillus plantarum).